Here is a 629-residue protein sequence, read N- to C-terminus: tRNA uridine 5-carboxymethylaminomethyl modification enzyme MnmG (629 aa).

FAD-binding positions include 13-18, V125, and S180; that span reads GGGHAG. NAD(+) is bound at residue 273-287; the sequence is GPRYCPSIEDKVMRF. Q370 is a binding site for FAD.

This sequence belongs to the MnmG family. As to quaternary structure, homodimer. Heterotetramer of two MnmE and two MnmG subunits. FAD is required as a cofactor.

It is found in the cytoplasm. In terms of biological role, NAD-binding protein involved in the addition of a carboxymethylaminomethyl (cmnm) group at the wobble position (U34) of certain tRNAs, forming tRNA-cmnm(5)s(2)U34. The protein is tRNA uridine 5-carboxymethylaminomethyl modification enzyme MnmG of Salmonella choleraesuis (strain SC-B67).